Reading from the N-terminus, the 44-residue chain is MRDLKTYLSVAPVLSTLWFASLAGLLIEINRLFPDALTFPFFSF.

The chain crosses the membrane as a helical span at residues 7–27 (YLSVAPVLSTLWFASLAGLLI).

Belongs to the PsaJ family.

Its subcellular location is the plastid. It localises to the chloroplast thylakoid membrane. Functionally, may help in the organization of the PsaE and PsaF subunits. The sequence is that of Photosystem I reaction center subunit IX from Barbarea verna (Land cress).